The primary structure comprises 82 residues: UPF0213 protein MW0443 (82 aa).

The region spanning 2-77 (DSHFVYIVKC…KTYTRQKKLR (76 aa)) is the GIY-YIG domain.

The protein belongs to the UPF0213 family.

This Staphylococcus aureus (strain MW2) protein is UPF0213 protein MW0443.